Here is a 390-residue protein sequence, read N- to C-terminus: Transforming growth factor beta-1 proprotein (390 aa).

Residues 1–29 (MPPSGLRLLPLLLPLPWLLVLTPGRPAAG) form the signal peptide. Residues 30–74 (LSTCKTIDMELVKRKRIEAIRGQILSKLRLASPPSQGEVPPGPLP) are straightjacket domain. Residues 75–271 (EAVLALYNST…ATPLERAQHL (197 aa)) form an arm domain region. N-linked (GlcNAc...) asparagine glycosylation is found at asparagine 82, asparagine 136, and asparagine 176. The segment at 226-252 (DSKDNKLHVEINGISPKRRGDLGTIHD) is bowtie tail. The Cell attachment site motif lies at 244-246 (RGD). 4 disulfides stabilise this stretch: cysteine 285-cysteine 294, cysteine 293-cysteine 356, cysteine 322-cysteine 387, and cysteine 326-cysteine 389.

It belongs to the TGF-beta family. In terms of assembly, homodimer; disulfide-linked. Interacts with the serine proteases, HTRA1 and HTRA3: the interaction with either inhibits TGFB1-mediated signaling and the HTRA protease activity is required for this inhibition. May interact with THSD4; this interaction may lead to sequestration by FBN1 microfibril assembly and attenuation of TGFB signaling. Interacts with CD109, DPT and ASPN. Interacts with EFEMP2. Interacts with TSKU; the interaction contributes to regulation of the hair cycle. Interacts with TGFBR3. Homodimer; disulfide-linked. Interacts with transforming growth factor beta-1 (TGF-beta-1) chain; interaction is non-covalent and maintains TGF-beta-1 in a latent state; each latency-associated peptide (LAP) monomer interacts with TGF-beta-1 in the other monomer. Interacts with LTBP1; leading to regulation of TGF-beta-1 activation. Interacts with LRRC32/GARP; leading to regulation of TGF-beta-1 activation on the surface of activated regulatory T-cells (Tregs). Interacts with LRRC33/NRROS; leading to regulation of TGF-beta-1 activation in macrophages and microglia. Interacts (via cell attachment site) with integrins ITGAV and ITGB6 (ITGAV:ITGB6), leading to release of the active TGF-beta-1. Interacts with NREP; the interaction results in a decrease in TGFB1 autoinduction. Interacts with HSP90AB1; inhibits latent TGFB1 activation. As to quaternary structure, homodimer; disulfide-linked. Interacts with TGF-beta receptors (TGFBR1 and TGFBR2), leading to signal transduction. Transforming growth factor beta-1 proprotein: The precursor proprotein is cleaved in the Golgi apparatus by FURIN to form Transforming growth factor beta-1 (TGF-beta-1) and Latency-associated peptide (LAP) chains, which remain non-covalently linked, rendering TGF-beta-1 inactive. Post-translationally, N-glycosylated. Deglycosylation leads to activation of Transforming growth factor beta-1 (TGF-beta-1); mechanisms triggering deglycosylation-driven activation of TGF-beta-1 are however unclear. In terms of tissue distribution, expressed in cardiomyocytes. Weakly expressed in the mammary glands, with a slight increase of expression following onset of involution.

It localises to the secreted. The protein resides in the extracellular space. Its subcellular location is the extracellular matrix. In terms of biological role, transforming growth factor beta-1 proprotein: Precursor of the Latency-associated peptide (LAP) and Transforming growth factor beta-1 (TGF-beta-1) chains, which constitute the regulatory and active subunit of TGF-beta-1, respectively. Required to maintain the Transforming growth factor beta-1 (TGF-beta-1) chain in a latent state during storage in extracellular matrix. Associates non-covalently with TGF-beta-1 and regulates its activation via interaction with 'milieu molecules', such as LTBP1, LRRC32/GARP and LRRC33/NRROS, that control activation of TGF-beta-1. Interaction with LRRC33/NRROS regulates activation of TGF-beta-1 in macrophages and microglia. Interaction with LRRC32/GARP controls activation of TGF-beta-1 on the surface of activated regulatory T-cells (Tregs). Interaction with integrins (ITGAV:ITGB6 or ITGAV:ITGB8) results in distortion of the Latency-associated peptide chain and subsequent release of the active TGF-beta-1. Its function is as follows. Multifunctional protein that regulates the growth and differentiation of various cell types and is involved in various processes, such as normal development, immune function, microglia function and responses to neurodegeneration. Activation into mature form follows different steps: following cleavage of the proprotein in the Golgi apparatus, Latency-associated peptide (LAP) and Transforming growth factor beta-1 (TGF-beta-1) chains remain non-covalently linked rendering TGF-beta-1 inactive during storage in extracellular matrix. At the same time, LAP chain interacts with 'milieu molecules', such as LTBP1, LRRC32/GARP and LRRC33/NRROS that control activation of TGF-beta-1 and maintain it in a latent state during storage in extracellular milieus. TGF-beta-1 is released from LAP by integrins (ITGAV:ITGB6 or ITGAV:ITGB8): integrin-binding to LAP stabilizes an alternative conformation of the LAP bowtie tail and results in distortion of the LAP chain and subsequent release of the active TGF-beta-1. Once activated following release of LAP, TGF-beta-1 acts by binding to TGF-beta receptors (TGFBR1 and TGFBR2), which transduce signal. While expressed by many cells types, TGF-beta-1 only has a very localized range of action within cell environment thanks to fine regulation of its activation by Latency-associated peptide chain (LAP) and 'milieu molecules'. Plays an important role in bone remodeling: acts as a potent stimulator of osteoblastic bone formation, causing chemotaxis, proliferation and differentiation in committed osteoblasts. Can promote either T-helper 17 cells (Th17) or regulatory T-cells (Treg) lineage differentiation in a concentration-dependent manner. At high concentrations, leads to FOXP3-mediated suppression of RORC and down-regulation of IL-17 expression, favoring Treg cell development. At low concentrations in concert with IL-6 and IL-21, leads to expression of the IL-17 and IL-23 receptors, favoring differentiation to Th17 cells. Stimulates sustained production of collagen through the activation of CREB3L1 by regulated intramembrane proteolysis (RIP). Mediates SMAD2/3 activation by inducing its phosphorylation and subsequent translocation to the nucleus. Positively regulates odontoblastic differentiation in dental papilla cells, via promotion of IPO7-mediated translocation of phosphorylated SMAD2 to the nucleus and subsequent transcription of target genes. Can induce epithelial-to-mesenchymal transition (EMT) and cell migration in various cell types. In Mus musculus (Mouse), this protein is Transforming growth factor beta-1 proprotein.